Here is a 175-residue protein sequence, read N- to C-terminus: Ribosome maturation factor RimM (175 aa).

A PRC barrel domain is found at 97–175 (EGEFYWHQLE…RMVVDWDPEF (79 aa)).

It belongs to the RimM family. As to quaternary structure, binds ribosomal protein uS19.

The protein localises to the cytoplasm. Functionally, an accessory protein needed during the final step in the assembly of 30S ribosomal subunit, possibly for assembly of the head region. Essential for efficient processing of 16S rRNA. May be needed both before and after RbfA during the maturation of 16S rRNA. It has affinity for free ribosomal 30S subunits but not for 70S ribosomes. The chain is Ribosome maturation factor RimM from Marinobacter nauticus (strain ATCC 700491 / DSM 11845 / VT8) (Marinobacter aquaeolei).